Consider the following 970-residue polypeptide: Disease resistance protein RGA2 (970 aa).

The 304-residue stretch at 135–438 folds into the NB-ARC domain; the sequence is RQAVRRETGS…MAHGFLLSKG (304 aa). Residue 182–189 participates in ATP binding; sequence GMGGLGKT. 14 LRR repeats span residues 525 to 548, 550 to 571, 573 to 594, 595 to 619, 638 to 662, 672 to 697, 752 to 777, 787 to 811, 813 to 832, 833 to 857, 859 to 882, 884 to 906, 907 to 931, and 946 to 970; these read FISLRVLNLGDSTFNKLPSSIGDL, HLRYLNLYGSGMRSLPKQLCKL, NLQTLDLQYCTKLCCLPKETSK, LGSLRNLLLDGSQSLTCMPPRIGSL, LGELGNLNLYGSIKISHLERVKNDK, KGNLHSLSMSWNNFGPHIYESEEVKV, LPCLESLELHWGSADVEYVEEVDIDV, FPSLRKLDIWDFGSLKGLLKKEGEE, FPVLEEMIIHECPFLTLSSN, LRALTSLRICYNKVATSFPEEMFKN, ANLKYLTISRCNNLKELPTSLASL, ALKSLKIQLCCALESLPEEGLEG, LSSLTELFVEHCNMLKCLPEGLQHL, and IKRCEKGIGEDWHKISHIPNVNIYI.

Belongs to the disease resistance NB-LRR family.

Disease resistance protein. Resistance proteins guard the plant against pathogens that contain an appropriate avirulence protein via a direct or indirect interaction with this avirulence protein. That triggers a defense system which restricts the pathogen growth. Confers a broad resistance to all known races of P.infestans. The chain is Disease resistance protein RGA2 (RGA2) from Solanum bulbocastanum (Wild potato).